We begin with the raw amino-acid sequence, 318 residues long: NADH-ubiquinone oxidoreductase chain 1 (318 aa).

8 consecutive transmembrane segments (helical) span residues 5 to 25, 69 to 89, 102 to 122, 148 to 168, 174 to 194, 215 to 235, 253 to 273, and 293 to 313; these read IISS…LTLI, SIFL…ILWI, LGLM…LTSG, LGLM…KLFI, IWLL…TLAE, VEFS…NILF, LYFS…FLWV, and FLPI…FFGV.

It belongs to the complex I subunit 1 family.

The protein localises to the mitochondrion inner membrane. It catalyses the reaction a ubiquinone + NADH + 5 H(+)(in) = a ubiquinol + NAD(+) + 4 H(+)(out). Core subunit of the mitochondrial membrane respiratory chain NADH dehydrogenase (Complex I) that is believed to belong to the minimal assembly required for catalysis. Complex I functions in the transfer of electrons from NADH to the respiratory chain. The immediate electron acceptor for the enzyme is believed to be ubiquinone. The chain is NADH-ubiquinone oxidoreductase chain 1 (MT-ND1) from Myxine glutinosa (Atlantic hagfish).